Here is a 943-residue protein sequence, read N- to C-terminus: Isoleucine--tRNA ligase (943 aa).

Positions 58–68 match the 'HIGH' region motif; sequence PYANGTIHIGH. Glu-567 contacts L-isoleucyl-5'-AMP. The 'KMSKS' region motif lies at 608–612; sequence KMSKS. Position 611 (Lys-611) interacts with ATP. Zn(2+) is bound by residues Cys-906, Cys-909, Cys-926, and Cys-929.

Belongs to the class-I aminoacyl-tRNA synthetase family. IleS type 1 subfamily. As to quaternary structure, monomer. The cofactor is Zn(2+).

The protein resides in the cytoplasm. The catalysed reaction is tRNA(Ile) + L-isoleucine + ATP = L-isoleucyl-tRNA(Ile) + AMP + diphosphate. Its function is as follows. Catalyzes the attachment of isoleucine to tRNA(Ile). As IleRS can inadvertently accommodate and process structurally similar amino acids such as valine, to avoid such errors it has two additional distinct tRNA(Ile)-dependent editing activities. One activity is designated as 'pretransfer' editing and involves the hydrolysis of activated Val-AMP. The other activity is designated 'posttransfer' editing and involves deacylation of mischarged Val-tRNA(Ile). In Pseudomonas syringae pv. tomato (strain ATCC BAA-871 / DC3000), this protein is Isoleucine--tRNA ligase.